The primary structure comprises 69 residues: DNA-directed RNA polymerase subunit omega (69 aa).

Belongs to the RNA polymerase subunit omega family. As to quaternary structure, the RNAP catalytic core consists of 2 alpha, 1 beta, 1 beta' and 1 omega subunit. When a sigma factor is associated with the core the holoenzyme is formed, which can initiate transcription.

The catalysed reaction is RNA(n) + a ribonucleoside 5'-triphosphate = RNA(n+1) + diphosphate. Functionally, promotes RNA polymerase assembly. Latches the N- and C-terminal regions of the beta' subunit thereby facilitating its interaction with the beta and alpha subunits. The chain is DNA-directed RNA polymerase subunit omega from Geotalea daltonii (strain DSM 22248 / JCM 15807 / FRC-32) (Geobacter daltonii).